The following is a 310-amino-acid chain: Nucleotide-binding protein BLA_1368 (310 aa).

The interval 1–21 (MQSARNEQRGTGPESPHAASP) is disordered. 32–39 (GMSGAGRS) provides a ligand contact to ATP. 83-86 (DVRS) lines the GTP pocket.

Belongs to the RapZ-like family.

Displays ATPase and GTPase activities. In Bifidobacterium animalis subsp. lactis (strain AD011), this protein is Nucleotide-binding protein BLA_1368.